Reading from the N-terminus, the 686-residue chain is Homoaconitase, mitochondrial (686 aa).

The transit peptide at 1–17 (MRVVRCVRRFSASRAVS) directs the protein to the mitochondrion. Cys337, Cys401, and Cys404 together coordinate [4Fe-4S] cluster.

Belongs to the aconitase/IPM isomerase family. It depends on [4Fe-4S] cluster as a cofactor.

The protein resides in the mitochondrion. The enzyme catalyses (2R,3S)-homoisocitrate = cis-homoaconitate + H2O. It functions in the pathway amino-acid biosynthesis; L-lysine biosynthesis via AAA pathway; L-alpha-aminoadipate from 2-oxoglutarate: step 3/5. Its function is as follows. Catalyzes the reversible hydration of cis-homoaconitate to (2R,3S)-homoisocitrate, a step in the alpha-aminoadipate pathway for lysine biosynthesis. This chain is Homoaconitase, mitochondrial (LYS4), found in Eremothecium gossypii (strain ATCC 10895 / CBS 109.51 / FGSC 9923 / NRRL Y-1056) (Yeast).